The chain runs to 371 residues: Cytochrome b (371 aa).

Transmembrane regions (helical) follow at residues 25-45, 69-90, 105-125, and 170-190; these read FGSM…FLAV, WMMQ…YIHI, WMSG…GYVL, and FFAL…LHVI. Heme b contacts are provided by His75 and His89. Heme b-binding residues include His174 and His188. A ubiquinone is bound at residue His193. 4 helical membrane-spanning segments follow: residues 218–238, 280–300, 312–332, and 339–358; these read HKDL…VSFF, LGGA…PFTH, LSQL…WAAT, and FITI…LSIP.

It belongs to the cytochrome b family. The cytochrome bc1 complex contains 3 respiratory subunits (MT-CYB, CYC1 and UQCRFS1), 2 core proteins (UQCRC1 and UQCRC2) and probably 6 low-molecular weight proteins. It depends on heme b as a cofactor.

It localises to the mitochondrion inner membrane. In terms of biological role, component of the ubiquinol-cytochrome c reductase complex (complex III or cytochrome b-c1 complex) that is part of the mitochondrial respiratory chain. The b-c1 complex mediates electron transfer from ubiquinol to cytochrome c. Contributes to the generation of a proton gradient across the mitochondrial membrane that is then used for ATP synthesis. The sequence is that of Cytochrome b (MT-CYB) from Liasis mackloti savuensis (Savu python).